The following is a 395-amino-acid chain: Putative 8-amino-7-oxononanoate synthase (395 aa).

R23 contacts substrate. 110–111 is a binding site for pyridoxal 5'-phosphate; it reads GY. Residue H135 coordinates substrate. Residues S182, 207 to 210, and 239 to 242 each bind pyridoxal 5'-phosphate; these read DEAH and TFSK. The residue at position 242 (K242) is an N6-(pyridoxal phosphate)lysine. Residue T356 coordinates substrate.

This sequence belongs to the class-II pyridoxal-phosphate-dependent aminotransferase family. BioF subfamily. As to quaternary structure, homodimer. Requires pyridoxal 5'-phosphate as cofactor.

The catalysed reaction is 6-carboxyhexanoyl-[ACP] + L-alanine + H(+) = (8S)-8-amino-7-oxononanoate + holo-[ACP] + CO2. It functions in the pathway cofactor biosynthesis; biotin biosynthesis. In terms of biological role, catalyzes the decarboxylative condensation of pimeloyl-[acyl-carrier protein] and L-alanine to produce 8-amino-7-oxononanoate (AON), [acyl-carrier protein], and carbon dioxide. The sequence is that of Putative 8-amino-7-oxononanoate synthase (bioF) from Bacillus cereus (strain ZK / E33L).